A 474-amino-acid polypeptide reads, in one-letter code: Cysteine--tRNA ligase (474 aa).

C34 is a binding site for Zn(2+). The 'HIGH' region signature appears at 36 to 46; the sequence is PTVYDYAHIGN. Zn(2+) contacts are provided by C219, H244, and E248. The 'KMSKS' region signature appears at 276-280; that stretch reads KMSKS. K279 contacts ATP.

Belongs to the class-I aminoacyl-tRNA synthetase family. As to quaternary structure, monomer. The cofactor is Zn(2+).

It is found in the cytoplasm. It carries out the reaction tRNA(Cys) + L-cysteine + ATP = L-cysteinyl-tRNA(Cys) + AMP + diphosphate. In Chlamydia pneumoniae (Chlamydophila pneumoniae), this protein is Cysteine--tRNA ligase (cysS).